A 190-amino-acid chain; its full sequence is Large ribosomal subunit protein bL25 (190 aa).

This sequence belongs to the bacterial ribosomal protein bL25 family. CTC subfamily. As to quaternary structure, part of the 50S ribosomal subunit; part of the 5S rRNA/L5/L18/L25 subcomplex. Contacts the 5S rRNA. Binds to the 5S rRNA independently of L5 and L18.

Its function is as follows. This is one of the proteins that binds to the 5S RNA in the ribosome where it forms part of the central protuberance. This Neisseria gonorrhoeae (strain ATCC 700825 / FA 1090) protein is Large ribosomal subunit protein bL25.